The primary structure comprises 253 residues: Trans-aconitate 2-methyltransferase (253 aa).

Belongs to the methyltransferase superfamily. Tam family.

It localises to the cytoplasm. It carries out the reaction trans-aconitate + S-adenosyl-L-methionine = (E)-3-(methoxycarbonyl)pent-2-enedioate + S-adenosyl-L-homocysteine. Its function is as follows. Catalyzes the S-adenosylmethionine monomethyl esterification of trans-aconitate. The sequence is that of Trans-aconitate 2-methyltransferase from Klebsiella pneumoniae (strain 342).